We begin with the raw amino-acid sequence, 165 residues long: Probable cell wall protein PGA15 (165 aa).

The signal sequence occupies residues 1 to 16 (MKFIIILFTLISIVTA). The GPI-anchor amidated serine moiety is linked to residue Ser143. Residues 144-165 (GAANYLTSFSIGTFFVFVLGLI) constitute a propeptide, removed in mature form.

It belongs to the IHD1 family. Post-translationally, the GPI-anchor is attached to the protein in the endoplasmic reticulum and serves to target the protein to the cell surface. There, the glucosamine-inositol phospholipid moiety is cleaved off and the GPI-modified mannoprotein is covalently attached via its lipidless GPI glycan remnant to the 1,6-beta-glucan of the outer cell wall layer.

Its subcellular location is the secreted. It localises to the cell wall. The protein resides in the membrane. Its function is as follows. Probable GPI-anchored cell wall protein that may be involved in cell wall organization, hyphal growth, as well as in virulence. This is Probable cell wall protein PGA15 (PGA15) from Candida albicans (strain SC5314 / ATCC MYA-2876) (Yeast).